The sequence spans 319 residues: Biotin synthase (319 aa).

The region spanning 44–273 is the Radical SAM core domain; that stretch reads IHGDGIDLCS…EAKIRLAGGR (230 aa). Cys-62, Cys-66, and Cys-69 together coordinate [4Fe-4S] cluster. [2Fe-2S] cluster-binding residues include Ser-106, Cys-138, Cys-198, and Arg-268.

This sequence belongs to the radical SAM superfamily. Biotin synthase family. As to quaternary structure, homodimer. [4Fe-4S] cluster serves as cofactor. The cofactor is [2Fe-2S] cluster.

The enzyme catalyses (4R,5S)-dethiobiotin + (sulfur carrier)-SH + 2 reduced [2Fe-2S]-[ferredoxin] + 2 S-adenosyl-L-methionine = (sulfur carrier)-H + biotin + 2 5'-deoxyadenosine + 2 L-methionine + 2 oxidized [2Fe-2S]-[ferredoxin]. It participates in cofactor biosynthesis; biotin biosynthesis; biotin from 7,8-diaminononanoate: step 2/2. Catalyzes the conversion of dethiobiotin (DTB) to biotin by the insertion of a sulfur atom into dethiobiotin via a radical-based mechanism. This is Biotin synthase from Clostridium perfringens (strain 13 / Type A).